The following is a 1477-amino-acid chain: Neurexin-1 (1477 aa).

The N-terminal stretch at 1-30 (MGTALLQRGGCFLLCLSLLLLGCWAELGSG) is a signal peptide. The Laminin G-like 1 domain maps to 31–217 (LEFPGAEGQW…PPNSGGGSPC (187 aa)). Over 31 to 1401 (LEFPGAEGQW…EVIRESSSTT (1371 aa)) the chain is Extracellular. Residues asparagine 125 and asparagine 190 are each glycosylated (N-linked (GlcNAc...) asparagine). The tract at residues 198–221 (DSGEVKLDDEPPNSGGGSPCEAGE) is disordered. The EGF-like 1 domain occupies 213–256 (GGSPCEAGEEGEGGVCLNGGVCSVVDDQAVCDCSRTGFRGKDCS). Disulfide bonds link cysteine 228/cysteine 243 and cysteine 245/cysteine 255. Laminin G-like domains follow at residues 283-473 (IATF…AFKC) and 480-672 (DPIT…KPSC). The Ca(2+) site is built by aspartate 329, leucine 346, and methionine 407. 5 disulfide bridges follow: cysteine 437–cysteine 473, cysteine 643–cysteine 672, cysteine 680–cysteine 691, cysteine 685–cysteine 700, and cysteine 702–cysteine 712. The EGF-like 2 domain occupies 676-713 (TAKPCLSNPCKNNGMCRDGWNRYVCDCSGTGYLGRSCE). 2 Laminin G-like domains span residues 718–891 (VLSY…IDYC) and 905–1080 (DPVT…ERGC). Aspartate 765 and leucine 782 together coordinate Ca(2+). Residue asparagine 790 is glycosylated (N-linked (GlcNAc...) asparagine). Residue arginine 841 coordinates Ca(2+). Disulfide bonds link cysteine 883-cysteine 891, cysteine 1052-cysteine 1080, cysteine 1087-cysteine 1098, cysteine 1092-cysteine 1107, and cysteine 1109-cysteine 1119. Positions 1083–1120 (PSTTCQEDSCSNQGVCLQQWDGFSCDCSMTSFSGPLCN) constitute an EGF-like 3 domain. Positions 1126–1294 (YIFSKGGGQI…DANIAIVGNV (169 aa)) constitute a Laminin G-like 6 domain. Ca(2+) contacts are provided by aspartate 1176 and valine 1193. N-linked (GlcNAc...) asparagine glycosylation occurs at asparagine 1223. Ca(2+) is bound by residues isoleucine 1245 and asparagine 1247. The interval 1325 to 1390 (TTTLATSTAR…AGGREPYPGS (66 aa)) is disordered. O-linked (Xyl...) (heparan sulfate) serine glycosylation is present at serine 1355. The helical transmembrane segment at 1402–1422 (GMVVGIVAAAALCILILLYAM) threads the bilayer. Topologically, residues 1423–1477 (YKYRNRDEGSYHVDESRNYISNSAQSNGAVVKEKQPSSAKSSNKNKKNKDKEYYV) are cytoplasmic. The tract at residues 1444–1470 (NSAQSNGAVVKEKQPSSAKSSNKNKKN) is interaction with CASK. The interval 1444–1477 (NSAQSNGAVVKEKQPSSAKSSNKNKKNKDKEYYV) is disordered.

This sequence belongs to the neurexin family. In terms of assembly, interacts (via laminin G-like domain 2 and/or laminin G-like domain 6) with NLGN1 forming a heterotetramer, where one NLGN1 dimer interacts with one NRXN1 dimer. Also interacts (via laminin G-like domain 2 and/or laminin G-like domain 6) with NLGN2, NLGN3 and NLGN4L; interactions with NLGN1, NLGN2, NLGN3 and NLGN4L are calcium-dependent. Interacts (via cytoplasmic C-terminal region) with CASK (via the PDZ, SH3 and guanylate kinase-like domains). Interacts (via cytoplasmic C-terminus) with CASKIN1 and APBA1. Interacts (via laminin G-like domain 2) with NXPH1 and NXPH3. Alpha-type isoforms (neurexin-1-alpha) interact (via laminin G-like domain 2 and/or laminin G-like domain 6) with DAG1 (via alpha-dystroglycan chain). Interacts with LRRTM1, LRRTM2, LRRTM3 and LRRTM4. Interacts with SYT13 and SYTL1. Interacts with CBLN1, CBLN2 and, less avidly, with CBLN4. Interacts with CLSTN3. In terms of processing, O-glycosylated; contains heparan sulfate. Heparan sulfate attachment is required for synapse development by mediating interactions with neuroligins and LRRTM2. In terms of tissue distribution, brain.

Its subcellular location is the presynaptic cell membrane. In terms of biological role, cell surface protein involved in cell-cell-interactions, exocytosis of secretory granules and regulation of signal transmission. Function is isoform-specific. Alpha-type isoforms have a long N-terminus with six laminin G-like domains and play an important role in synaptic signal transmission. Alpha-type isoforms play a role in the regulation of calcium channel activity and Ca(2+)-triggered neurotransmitter release at synapses and at neuromuscular junctions. They play an important role in Ca(2+)-triggered exocytosis of secretory granules in pituitary gland. They may affect their functions at synapses and in endocrine cells via their interactions with proteins from the exocytotic machinery. Likewise, alpha-type isoforms play a role in regulating the activity of postsynaptic NMDA receptors, a subtype of glutamate-gated ion channels. Both alpha-type and beta-type isoforms may play a role in the formation or maintenance of synaptic junctions via their interactions (via the extracellular domains) with neuroligin family members, CBLN1 or CBLN2. In vitro, triggers the de novo formation of presynaptic structures. May be involved in specification of excitatory synapses. Alpha-type isoforms were first identified as receptors for alpha-latrotoxin from spider venom. The protein is Neurexin-1 (NRXN1) of Homo sapiens (Human).